We begin with the raw amino-acid sequence, 250 residues long: Insertion sequence IS232 putative ATP-binding protein (250 aa).

108-115 lines the ATP pocket; it reads GPSGVGKT.

This sequence belongs to the IS21/IS1162 putative ATP-binding protein family.

This chain is Insertion sequence IS232 putative ATP-binding protein, found in Bacillus thuringiensis subsp. berliner.